We begin with the raw amino-acid sequence, 162 residues long: Phosphopantetheine adenylyltransferase (162 aa).

Ser-11 is a substrate binding site. ATP is bound by residues 11–12 (SF) and His-19. Substrate is bound by residues Lys-43, Val-76, and Arg-90. ATP-binding positions include 91-93 (GLR), Glu-101, and 126-132 (HLYISSS).

It belongs to the bacterial CoaD family. As to quaternary structure, homohexamer. Requires Mg(2+) as cofactor.

The protein resides in the cytoplasm. The catalysed reaction is (R)-4'-phosphopantetheine + ATP + H(+) = 3'-dephospho-CoA + diphosphate. It functions in the pathway cofactor biosynthesis; coenzyme A biosynthesis; CoA from (R)-pantothenate: step 4/5. Is inhibited by a series of cycloalkyl pyrimidines, which also show suppression of bacterial growth. Its function is as follows. Reversibly transfers an adenylyl group from ATP to 4'-phosphopantetheine, yielding dephospho-CoA (dPCoA) and pyrophosphate. This is Phosphopantetheine adenylyltransferase from Streptococcus pneumoniae (strain ATCC BAA-255 / R6).